Reading from the N-terminus, the 610-residue chain is Methionine--tRNA ligase (610 aa).

The 'HIGH' region motif lies at 12–22 (PYANGPRHIGH). Residues Cys-144, Cys-147, Cys-157, and Cys-160 each coordinate Zn(2+). The 'KMSKS' region signature appears at 348-352 (KFSSS). Ser-351 contributes to the ATP binding site.

Belongs to the class-I aminoacyl-tRNA synthetase family. MetG type 1 subfamily. As to quaternary structure, monomer. Zn(2+) serves as cofactor.

It localises to the cytoplasm. The enzyme catalyses tRNA(Met) + L-methionine + ATP = L-methionyl-tRNA(Met) + AMP + diphosphate. Is required not only for elongation of protein synthesis but also for the initiation of all mRNA translation through initiator tRNA(fMet) aminoacylation. The chain is Methionine--tRNA ligase from Corynebacterium diphtheriae (strain ATCC 700971 / NCTC 13129 / Biotype gravis).